We begin with the raw amino-acid sequence, 383 residues long: MKNKLPPFIEIYRALIATPSISATEEALDQSNADLITLLADWFKDLGFNVEVQPVPGTRNKFNMLASCGQGAGGLLLAGHTDTVPFDDGRWTRDPFTLTEHDGKLYGLGTADMKGFFAFILDALRDVDVTKLKKPLYILATADEETSMAGARYFAETTALRPDCAIIGEPTSLQPVRAHKGHISNAIRIQGQSGHSSDPARGVNAIELMHDAIGHILQLRDNLKERYHYEAFTVPYPTLNLGHIHGGDASNRICACCELHMDIRPLPGMTLNELNGLLNDALAPVSERWPGRLTVDELHPPIPGYECPPNHQLVEVVEKLLGAKTEVVNYCTEAPFIQTLCPTLVLGPGSINQAHQPDEYLETRFIKPTRELITQVIHHFCWH.

Histidine 80 is a binding site for Zn(2+). The active site involves aspartate 82. Aspartate 112 provides a ligand contact to Zn(2+). Residue glutamate 144 is part of the active site. Zn(2+) contacts are provided by glutamate 145, glutamate 169, and histidine 355.

It belongs to the peptidase M20A family. ArgE subfamily. As to quaternary structure, homodimer. Zn(2+) serves as cofactor. Co(2+) is required as a cofactor. Requires glutathione as cofactor.

Its subcellular location is the cytoplasm. It carries out the reaction N(2)-acetyl-L-ornithine + H2O = L-ornithine + acetate. The protein operates within amino-acid biosynthesis; L-arginine biosynthesis; L-ornithine from N(2)-acetyl-L-ornithine (linear): step 1/1. Catalyzes the hydrolysis of the amide bond of N(2)-acetylated L-amino acids. Cleaves the acetyl group from N-acetyl-L-ornithine to form L-ornithine, an intermediate in L-arginine biosynthesis pathway, and a branchpoint in the synthesis of polyamines. The chain is Acetylornithine deacetylase from Escherichia coli O8 (strain IAI1).